The sequence spans 339 residues: Serpentine receptor class alpha-24 (339 aa).

Transmembrane regions (helical) follow at residues 26–46, 65–82, 112–132, 151–171, 199–219, 248–268, and 284–304; these read ITVK…YYFA, LILL…TTML, ELFV…SLAF, VSIF…YVGL, FRTL…YLSV, VCIL…GVNY, and LAPF…VIHC.

This sequence belongs to the nematode receptor-like protein sra family.

It is found in the membrane. In Caenorhabditis elegans, this protein is Serpentine receptor class alpha-24 (sra-24).